The sequence spans 525 residues: MTPTELKTAVERRRTFAIISHPDAGKTTITEQLLLFGGVIRQAGTVKGKKSGQFAKSDWMDIEKQRGISVTSSVMQFDYAGKRINILDTPGHEDFSEDTYRTLMAVDAAVMVIDSAKGIEPQTKKLFKVCKMRGIPIFTFMNKLDRDGREPLDLIAELEELLDIEGCAMNWPIGMGKDLRGLYDIANKRIEMYRPEDEANPYLALDEEGKIAGDNPLKEDSVYTQALDDIELIGEAGNAYDPAKIATGDQTPIFFGSALTNFGVKTFLEAFVDMAPAPEAHQTQEETQVEPTNEDFSGFIFKIQANMNPAHRDRIAFVRVCSGEFQRGIDVTLTRTGKKMRLNNSTEFMADAREQVTSAVAGDIVGLYDTGNFQIGDTIHTGKEAISFEKLPQFTPELFMRVTAKNVMKQKSFHKGIQQLVQEGAIQLYKTYTTSDYILGAVGQLQFEVFQYRMQHEYNSEVIMEPIGSRTARWIDPEKLDQSMSSSRNLLVKDIHDQPLFLFENKFAERWFQDKYPEVKLTAKL.

The region spanning 11 to 279 is the tr-type G domain; the sequence is ERRRTFAIIS…AFVDMAPAPE (269 aa). GTP is bound by residues 20–27, 88–92, and 142–145; these read SHPDAGKT, DTPGH, and NKLD.

It belongs to the TRAFAC class translation factor GTPase superfamily. Classic translation factor GTPase family. PrfC subfamily.

It localises to the cytoplasm. Increases the formation of ribosomal termination complexes and stimulates activities of RF-1 and RF-2. It binds guanine nucleotides and has strong preference for UGA stop codons. It may interact directly with the ribosome. The stimulation of RF-1 and RF-2 is significantly reduced by GTP and GDP, but not by GMP. The polypeptide is Peptide chain release factor 3 (Latilactobacillus sakei subsp. sakei (strain 23K) (Lactobacillus sakei subsp. sakei)).